The primary structure comprises 157 residues: Ribosomal RNA large subunit methyltransferase H (157 aa).

S-adenosyl-L-methionine-binding positions include Leu-73, Gly-105, and 124 to 129 (LSKMTF).

This sequence belongs to the RNA methyltransferase RlmH family. As to quaternary structure, homodimer.

The protein resides in the cytoplasm. It carries out the reaction pseudouridine(1915) in 23S rRNA + S-adenosyl-L-methionine = N(3)-methylpseudouridine(1915) in 23S rRNA + S-adenosyl-L-homocysteine + H(+). Its function is as follows. Specifically methylates the pseudouridine at position 1915 (m3Psi1915) in 23S rRNA. This is Ribosomal RNA large subunit methyltransferase H from Parabacteroides distasonis (strain ATCC 8503 / DSM 20701 / CIP 104284 / JCM 5825 / NCTC 11152).